The following is a 348-amino-acid chain: Terpene cyclase ctvD (348 aa).

Residues 2 to 22 form a helical membrane-spanning segment; that stretch reads ALSAYFLLCLSVLGLDAIYGF. Residue N51 is glycosylated (N-linked (GlcNAc...) asparagine). Transmembrane regions (helical) follow at residues 77 to 97, 116 to 136, 161 to 181, 191 to 211, 235 to 255, 283 to 303, and 323 to 343; these read PGLSLQAFHFLGAIVAVWVAI, LFAMLSQVVAIAVIVPLWCAI, LIPISMVLGFGIPTIGMLLPE, QIAIAVWQIWPIYVALWHWGL, FAFVCAIIPHAVSWGLSLTLI, GLWFLQWDHLIGMGSFLLWAM, and LKVGVLCLISGPCGAAVWLLW.

Belongs to the membrane-bound ascI terpene cyclase family.

It is found in the membrane. It functions in the pathway mycotoxin biosynthesis. Hydrolase; part of the gene cluster that mediates the biosynthesis of citreoviridin, an inhibitor of the of F1-ATPase beta-subunit. The HR-PKS ctvA accepts acetyl-CoA as the starter unit and catalyzes eight iterations of malonyl-CoA extension and four iterations of SAM-dependent methylation at C4, C12, C14, and C16. The KR and DH domains selectively act on the first six iterations to generate the hexaene chain. In the last three iterations, the KR and DH domains terminate their functions to yield a beta,delta-diketo ester moiety, which then undergoes intramolecular cyclization to yield an alpha-pyrone intermediate. Subsequently, ctvB methylates the alpha-pyrone hydroxyl group to generate citreomontanin. In order to form the tetrahydrofuran ring with the correct stereochemistry, the terminal alkenes of citreomontanin need to undergo isomerization to yield a (17Z)-hexaene, a step that could be catalyzed by ctvC. The (17Z)-hexaene then undergoes bisepoxidation by ctvC to form a (17R,16R,15S,14R)-bisepoxide moiety. Lastly, ctvD acts as a regioselective hydrolase to form the tetrahydrofuran ring with the substituents in the correct absolute configuration, completing the biosynthesis of citreoviridin. The polypeptide is Terpene cyclase ctvD (Aspergillus terreus (strain NIH 2624 / FGSC A1156)).